The sequence spans 194 residues: Dephospho-CoA kinase (194 aa).

Positions 3–194 (IVGLTGSIGM…RAIVDDLRAG (192 aa)) constitute a DPCK domain. 11 to 16 (GMGKST) contacts ATP.

This sequence belongs to the CoaE family.

The protein localises to the cytoplasm. The catalysed reaction is 3'-dephospho-CoA + ATP = ADP + CoA + H(+). It functions in the pathway cofactor biosynthesis; coenzyme A biosynthesis; CoA from (R)-pantothenate: step 5/5. Functionally, catalyzes the phosphorylation of the 3'-hydroxyl group of dephosphocoenzyme A to form coenzyme A. The protein is Dephospho-CoA kinase of Rhizobium meliloti (strain 1021) (Ensifer meliloti).